The following is a 122-amino-acid chain: Large ribosomal subunit protein uL14 (122 aa).

The protein belongs to the universal ribosomal protein uL14 family. As to quaternary structure, part of the 50S ribosomal subunit. Forms a cluster with proteins L3 and L19. In the 70S ribosome, L14 and L19 interact and together make contacts with the 16S rRNA in bridges B5 and B8.

Functionally, binds to 23S rRNA. Forms part of two intersubunit bridges in the 70S ribosome. The polypeptide is Large ribosomal subunit protein uL14 (Desulforudis audaxviator (strain MP104C)).